The following is a 541-amino-acid chain: Metal transporter Nramp6 (541 aa).

A compositionally biased stretch (low complexity) spans 1–18 (MAPLPAAATATASSAATP). The interval 1–44 (MAPLPAAATATASSAATPADDEAHSLLPSTPSNEEDDDDLEERA) is disordered. 12 consecutive transmembrane segments (helical) span residues 87–107 (LWLF…PGNL), 120–140 (TLLW…LLAA), 172–192 (VAMV…IKIL), 196–216 (FLPL…FLSL), 224–244 (LEAV…WMFT), 270–290 (AVGV…SALV), 316–336 (IALA…AKGF), 358–378 (FGGG…AAGQ), 404–424 (IRSL…ALFF), 436–456 (WLNV…ITLV), 474–494 (VTWT…LDFF), and 502–522 (LSGS…LYLI).

The protein belongs to the NRAMP (TC 2.A.55) family.

It is found in the membrane. Functionally, probable metal transporter. The protein is Metal transporter Nramp6 (NRAMP6) of Oryza sativa subsp. japonica (Rice).